Consider the following 1034-residue polypeptide: Vacuolar membrane protease (1034 aa).

Topologically, residues 1-11 (MAVKNPFGFTT) are cytoplasmic. The chain crosses the membrane as a helical span at residues 12–32 (GPVTFWLIVVYAAFLIPLVWI). At 33-418 (HESVPAVPSS…GFAILELRGL (386 aa)) the chain is on the vacuolar side. 2 N-linked (GlcNAc...) asparagine glycosylation sites follow: N51 and N141. Zn(2+)-binding residues include H200 and D212. E246 functions as the Proton acceptor in the catalytic mechanism. Zn(2+) is bound by residues E247, E272, and H345. Residues 419–439 (FAWTLTLLIVSPLVLALVTYI) form a helical membrane-spanning segment. The Cytoplasmic segment spans residues 440-470 (LSRKDKYYFFSRKVTADEDDEPVSVGGWKGF). Residues 471 to 491 (FRFPFALVLSASITVLSAFLI) form a helical membrane-spanning segment. At 492–497 (RRVNPH) the chain is on the vacuolar side. The chain crosses the membrane as a helical span at residues 498–518 (IIYSSPYAVWAMTLSLFFLVF). Over 519 to 536 (WTIAKGASVVRPSALQRG) the chain is Cytoplasmic. Residues 537 to 557 (YAHIWLFVISWVILVAVTAAA) traverse the membrane as a helical segment. Topologically, residues 558–567 (DRFKIASGYP) are vacuolar. The helical transmembrane segment at 568-588 (FAFFHSAVFVSALISLCDLFA) threads the bilayer. The Cytoplasmic segment spans residues 589 to 703 (LPSKQEFARN…NLPSWTWFFQ (115 aa)). The segment at 623 to 653 (HSHVEDDVAEEPTETTPLRSGENGNGNNGTI) is disordered. The chain crosses the membrane as a helical span at residues 704 to 724 (LLLLAPITITVFLQIALFIVS). Residues 725-736 (AIHSAAADGNDP) are Vacuolar-facing. A helical membrane pass occupies residues 737 to 757 (ILVYAAIAAFSIIILLPATPF). The Cytoplasmic portion of the chain corresponds to 758–762 (IHRAS). The chain crosses the membrane as a helical span at residues 763 to 783 (FYLPLFLLLVFFVTLIYNLVA). The Vacuolar portion of the chain corresponds to 784-1034 (FPFSAENRLK…LVEGRKKFRA (251 aa)). N805, N866, and N879 each carry an N-linked (GlcNAc...) asparagine glycan.

Belongs to the peptidase M28 family. Zn(2+) serves as cofactor.

The protein resides in the vacuole membrane. In terms of biological role, may be involved in vacuolar sorting and osmoregulation. This Colletotrichum graminicola (strain M1.001 / M2 / FGSC 10212) (Maize anthracnose fungus) protein is Vacuolar membrane protease.